A 234-amino-acid polypeptide reads, in one-letter code: t-SNARE protein aex-4 (234 aa).

T-SNARE coiled-coil homology domains lie at Ala37 to Met99 and Asp170 to Leu232.

It belongs to the SNAP-25 family. As to expression, expressed in intestinal cells.

The protein localises to the cell membrane. Its function is as follows. t-SNARE protein which regulates the secretion of aex-5 from intestinal cells. Involved in the defecation motor program, which is a coordinated series of three muscle contractions that occurs every 45 seconds. The chain is t-SNARE protein aex-4 from Caenorhabditis elegans.